A 401-amino-acid chain; its full sequence is MENQEKPLSVDEEYDLWKSNVPLMYDFVSETRLTWPSLTVQWLPTPVQELDGGFIKQELIIGTHTSGEEENYLKFAEINLPKEILSNEDPQEEAGEEYQSSLPAPRSNIRITAKYEHEEEITRARYMPQDPNIVATINGQGTVFLYSRSEGLQSTLKFHKDNGYALSFSTLVKGRLLSGSDDHTVALWEVGSGGDPTKPVRTWNDLHSDIINDNKWHNFNKDLFGTVSEDSLLKINDVRANNTTIDTVKCPQPFNTLAFSHHSSNLLAAAGMDSYVYLYDLRNMKEPLHHMSGHEDAVNNLEFSTHVDGVVVSSGSDNRLMMWDLKQIGAEQTPDDAEDGVPELIMVHAGHRSSVNDFDLNPQIPWLVASAEEENILQVWKCSHSLPIVGGPPKVNKDIIS.

WD repeat units lie at residues 116 to 147 (EHEE…FLYS), 158 to 189 (FHKD…ALWE), 206 to 237 (LHSD…KIND), 249 to 280 (KCPQ…YLYD), and 293 to 324 (GHED…MMWD). Residues 335 to 339 (DDAED) are interaction with the histone H4 N-terminus. A WD 6 repeat occupies 350-381 (GHRSSVNDFDLNPQIPWLVASAEEENILQVWK).

It belongs to the WD repeat RBAP46/RBAP48/MSI1 family. Component of the HAT-B complex composed of at least HAT1 and HAT2. In the cytoplasm, this complex binds to the histone H4 tail. In the nucleus, the HAT-B complex has an additional component, the histone H3/H4 chaperone HIF1.

It is found in the cytoplasm. Its subcellular location is the nucleus. Functionally, regulatory subunit of the histone acetylase B (HAT-B) complex. The complex acetylates 'Lys-12' of histone H4 which is required for telomeric silencing. HAT2 is required for high affinity binding of the acetyltransferase to histone H4, for the nuclear location of HAT1 and for the HAT1-HIF1 interaction. Alone, it is unable to bind to H4, requiring HAT1 for high affinity interaction with the histone tail. HAT2 also has a HAT1 independent function in life-span regulation. This Saccharomyces cerevisiae (strain ATCC 204508 / S288c) (Baker's yeast) protein is Histone acetyltransferase type B subunit 2 (HAT2).